The primary structure comprises 472 residues: ATP-dependent rRNA helicase rrp3 (472 aa).

Residues 1-51 (MPDVKKRKIAHEAPEHGSDAESTSSHESVAQQDDTAETQDEAAATETRPAP) are disordered. Residues 10–19 (AHEAPEHGSD) show a composition bias toward basic and acidic residues. Residues 20 to 29 (AESTSSHESV) are compositionally biased toward polar residues. The short motif at 52–80 (KSFKDLGIIDQLCEACETMGYKAPTPIQA) is the Q motif element. The Helicase ATP-binding domain occupies 83 to 254 (IPLALQGRDL…RASLSNPLRV (172 aa)). 96–103 (AETGSGKT) contributes to the ATP binding site. Positions 202–205 (DEAD) match the DEAD box motif. The region spanning 282–426 (YLVYLLNEFV…EYELEKDEVM (145 aa)) is the Helicase C-terminal domain. The interval 451 to 472 (GTKAKKFGKGKRSRDEMDQEEG) is disordered. Positions 452–462 (TKAKKFGKGKR) are enriched in basic residues.

This sequence belongs to the DEAD box helicase family. DDX47/RRP3 subfamily. In terms of assembly, interacts with the SSU processome.

It is found in the nucleus. It catalyses the reaction ATP + H2O = ADP + phosphate + H(+). In terms of biological role, ATP-dependent rRNA helicase required for pre-ribosomal RNA processing. Involved in the maturation of the 35S-pre-rRNA and to its cleavage to mature 18S rRNA. The chain is ATP-dependent rRNA helicase rrp3 from Neosartorya fischeri (strain ATCC 1020 / DSM 3700 / CBS 544.65 / FGSC A1164 / JCM 1740 / NRRL 181 / WB 181) (Aspergillus fischerianus).